Consider the following 119-residue polypeptide: Large ribosomal subunit protein uL18 (119 aa).

This sequence belongs to the universal ribosomal protein uL18 family. Part of the 50S ribosomal subunit; part of the 5S rRNA/L5/L18/L25 subcomplex. Contacts the 5S and 23S rRNAs.

Functionally, this is one of the proteins that bind and probably mediate the attachment of the 5S RNA into the large ribosomal subunit, where it forms part of the central protuberance. This chain is Large ribosomal subunit protein uL18, found in Sorangium cellulosum (strain So ce56) (Polyangium cellulosum (strain So ce56)).